Here is a 514-residue protein sequence, read N- to C-terminus: 2,3-bisphosphoglycerate-independent phosphoglycerate mutase (514 aa).

Mn(2+) is bound by residues Asp-13 and Ser-69. The Phosphoserine intermediate role is filled by Ser-69. Residues His-128, 158–159 (RD), Arg-189, Arg-195, 263–266 (RADR), and Lys-336 contribute to the substrate site. Residues Asp-402, His-406, Asp-443, His-444, and His-461 each coordinate Mn(2+).

Belongs to the BPG-independent phosphoglycerate mutase family. In terms of assembly, monomer. The cofactor is Mn(2+).

It carries out the reaction (2R)-2-phosphoglycerate = (2R)-3-phosphoglycerate. It participates in carbohydrate degradation; glycolysis; pyruvate from D-glyceraldehyde 3-phosphate: step 3/5. Catalyzes the interconversion of 2-phosphoglycerate and 3-phosphoglycerate. The sequence is that of 2,3-bisphosphoglycerate-independent phosphoglycerate mutase from Akkermansia muciniphila (strain ATCC BAA-835 / DSM 22959 / JCM 33894 / BCRC 81048 / CCUG 64013 / CIP 107961 / Muc).